The sequence spans 317 residues: Pinoresinol reductase 1 (317 aa).

NADP(+) is bound by residues Thr18, Tyr20, Ile21, Arg41, Lys50, Ser90, Gly91, Arg95, Asn98, Ser121, and Glu122. Met125 is a (-)-pinoresinol binding site. Lys144 and Phe166 together coordinate NADP(+). Catalysis depends on Lys144, which acts as the Proton acceptor. Positions 177 and 178 each coordinate (-)-pinoresinol.

This sequence belongs to the NmrA-type oxidoreductase family. Isoflavone reductase subfamily. In terms of assembly, forms homodimers. In terms of tissue distribution, expressed in roots and stems.

It carries out the reaction (-)-lariciresinol + NADP(+) = (-)-pinoresinol + NADPH + H(+). The catalysed reaction is (+)-lariciresinol + NADP(+) = (+)-pinoresinol + NADPH + H(+). Reductase involved in lignan biosynthesis. Involved in secondary cell wall biosynthesis in fiber cells. Unlike conventional pinoresinol reductases that can reduce both pinoresinol and lariciresinol, PRR1 shows a strict substrate preference toward pinoresinol. Active on both (+) and (-)-pinoresinol. Abstracts the 4R-hydride from the NADPH cofactor during catalysis. The sequence is that of Pinoresinol reductase 1 from Arabidopsis thaliana (Mouse-ear cress).